Reading from the N-terminus, the 231-residue chain is GTP cyclohydrolase III (231 aa).

The protein belongs to the archaeal-type GTP cyclohydrolase family.

It catalyses the reaction GTP + 3 H2O = 2-amino-5-formylamino-6-(5-phospho-D-ribosylamino)pyrimidin-4(3H)-one + 2 phosphate + 2 H(+). Functionally, catalyzes the formation of 2-amino-5-formylamino-6-ribofuranosylamino-4(3H)-pyrimidinone ribonucleotide monophosphate and inorganic phosphate from GTP. Also has an independent pyrophosphate phosphohydrolase activity. The protein is GTP cyclohydrolase III of Saccharolobus solfataricus (strain ATCC 35092 / DSM 1617 / JCM 11322 / P2) (Sulfolobus solfataricus).